Consider the following 250-residue polypeptide: 5-oxoprolinase subunit A (250 aa).

The protein belongs to the LamB/PxpA family. In terms of assembly, forms a complex composed of PxpA, PxpB and PxpC.

It catalyses the reaction 5-oxo-L-proline + ATP + 2 H2O = L-glutamate + ADP + phosphate + H(+). Functionally, catalyzes the cleavage of 5-oxoproline to form L-glutamate coupled to the hydrolysis of ATP to ADP and inorganic phosphate. In Staphylococcus aureus (strain bovine RF122 / ET3-1), this protein is 5-oxoprolinase subunit A.